The primary structure comprises 361 residues: tRNA-specific 2-thiouridylase MnmA (361 aa).

Residues 11 to 18 (GMSGGVDS) and M37 contribute to the ATP site. The interval 97 to 99 (NPD) is interaction with target base in tRNA. C102 serves as the catalytic Nucleophile. Cysteines 102 and 199 form a disulfide. Residue G126 coordinates ATP. The interval 149 to 151 (KDQ) is interaction with tRNA. C199 functions as the Cysteine persulfide intermediate in the catalytic mechanism. An interaction with tRNA region spans residues 311–312 (RY).

Belongs to the MnmA/TRMU family.

The protein resides in the cytoplasm. It carries out the reaction S-sulfanyl-L-cysteinyl-[protein] + uridine(34) in tRNA + AH2 + ATP = 2-thiouridine(34) in tRNA + L-cysteinyl-[protein] + A + AMP + diphosphate + H(+). In terms of biological role, catalyzes the 2-thiolation of uridine at the wobble position (U34) of tRNA, leading to the formation of s(2)U34. In Cupriavidus taiwanensis (strain DSM 17343 / BCRC 17206 / CCUG 44338 / CIP 107171 / LMG 19424 / R1) (Ralstonia taiwanensis (strain LMG 19424)), this protein is tRNA-specific 2-thiouridylase MnmA.